The sequence spans 324 residues: dITP/XTP pyrophosphatase (324 aa).

Positions 1 to 126 (MTKSIFEYKD…SDNKSDFGDV (126 aa)) are unknown. The segment at 127–324 (LLIATRNEGK…EVFPAWQNKQ (198 aa)) is NTP pyrophosphatase. 131-136 (TRNEGK) contributes to the substrate binding site. Asp193 acts as the Proton acceptor in catalysis. Asp193 serves as a coordination point for Mg(2+). Substrate contacts are provided by residues Ser194, 277–280 (FGYD), Lys300, and 305–306 (HR).

Belongs to the HAM1 NTPase family. Homodimer. Requires Mg(2+) as cofactor.

It catalyses the reaction XTP + H2O = XMP + diphosphate + H(+). It carries out the reaction dITP + H2O = dIMP + diphosphate + H(+). The enzyme catalyses ITP + H2O = IMP + diphosphate + H(+). In terms of biological role, pyrophosphatase that catalyzes the hydrolysis of nucleoside triphosphates to their monophosphate derivatives, with a high preference for the non-canonical purine nucleotides XTP (xanthosine triphosphate), dITP (deoxyinosine triphosphate) and ITP. Seems to function as a house-cleaning enzyme that removes non-canonical purine nucleotides from the nucleotide pool, thus preventing their incorporation into DNA/RNA and avoiding chromosomal lesions. In Streptococcus thermophilus (strain ATCC BAA-250 / LMG 18311), this protein is dITP/XTP pyrophosphatase.